Here is a 334-residue protein sequence, read N- to C-terminus: Malate dehydrogenase, mitochondrial (334 aa).

Residues 1–17 (MLSRVAKRAFSSTVANP) constitute a mitochondrion transit peptide. NAD(+) is bound by residues 24-30 (GAGGGIG) and D50. Substrate-binding residues include R99 and R105. Residues N112 and 135–137 (ISN) each bind NAD(+). 2 residues coordinate substrate: N137 and R171. S177 carries the post-translational modification Phosphoserine. Catalysis depends on H195, which acts as the Proton acceptor. The residue at position 199 (T199) is a Phosphothreonine. M245 is a binding site for NAD(+).

This sequence belongs to the LDH/MDH superfamily. MDH type 1 family. In terms of assembly, homodimer.

It localises to the mitochondrion matrix. The enzyme catalyses (S)-malate + NAD(+) = oxaloacetate + NADH + H(+). This Saccharomyces cerevisiae (strain ATCC 204508 / S288c) (Baker's yeast) protein is Malate dehydrogenase, mitochondrial (MDH1).